We begin with the raw amino-acid sequence, 585 residues long: Aspartate--tRNA ligase (585 aa).

An L-aspartate-binding site is contributed by Glu-169. Residues 193-196 form an aspartate region; that stretch reads QLFK. Arg-215 lines the L-aspartate pocket. ATP-binding positions include 215–217 and Gln-224; that span reads RDE. His-443 provides a ligand contact to L-aspartate. Glu-478 serves as a coordination point for ATP. Arg-485 is a binding site for L-aspartate. An ATP-binding site is contributed by 530–533; sequence GLDR.

Belongs to the class-II aminoacyl-tRNA synthetase family. Type 1 subfamily. In terms of assembly, homodimer.

It is found in the cytoplasm. It catalyses the reaction tRNA(Asp) + L-aspartate + ATP = L-aspartyl-tRNA(Asp) + AMP + diphosphate. In terms of biological role, catalyzes the attachment of L-aspartate to tRNA(Asp) in a two-step reaction: L-aspartate is first activated by ATP to form Asp-AMP and then transferred to the acceptor end of tRNA(Asp). The polypeptide is Aspartate--tRNA ligase (Pseudothermotoga lettingae (strain ATCC BAA-301 / DSM 14385 / NBRC 107922 / TMO) (Thermotoga lettingae)).